We begin with the raw amino-acid sequence, 502 residues long: Glutamate decarboxylase 1 (502 aa).

Ser-8 carries the phosphoserine modification. At Lys-277 the chain carries N6-(pyridoxal phosphate)lysine. Positions 469 to 502 (LMVTVKKSDIDKQRDIITGWKKFVADRKKTSGIC) are calmodulin-binding.

It belongs to the group II decarboxylase family. In terms of assembly, homohexamer. Interacts with calmodulin with a 1:3 stoichiometry. Requires pyridoxal 5'-phosphate as cofactor. As to expression, expressed in roots. Detected at low levels in shoots of young seedlings. Not detected in the root tips or in the central vascular bundle in the elongating region of mature roots.

It carries out the reaction L-glutamate + H(+) = 4-aminobutanoate + CO2. Up-regulated by calmodulin binding at physiological pH. In terms of biological role, catalyzes the conversion of glutamate to 4-aminobutanoate (GABA). The calmodulin-binding is calcium-dependent and it is proposed to directly or indirectly form a calcium regulated control of GABA biosynthesis. The sequence is that of Glutamate decarboxylase 1 (GAD1) from Arabidopsis thaliana (Mouse-ear cress).